The sequence spans 776 residues: Protein translocase subunit SecA 2 (776 aa).

ATP contacts are provided by residues Gln-80, 98–102 (GEGKT), and Asp-486.

This sequence belongs to the SecA family. In terms of assembly, monomer and homodimer. Part of the essential Sec protein translocation apparatus which comprises SecA, SecYEG and auxiliary proteins SecDF. Other proteins may also be involved.

It is found in the cell membrane. The protein resides in the cytoplasm. The catalysed reaction is ATP + H2O + cellular proteinSide 1 = ADP + phosphate + cellular proteinSide 2.. In terms of biological role, part of the Sec protein translocase complex. Interacts with the SecYEG preprotein conducting channel. Has a central role in coupling the hydrolysis of ATP to the transfer of proteins into and across the cell membrane, serving as an ATP-driven molecular motor driving the stepwise translocation of polypeptide chains across the membrane. This Listeria innocua serovar 6a (strain ATCC BAA-680 / CLIP 11262) protein is Protein translocase subunit SecA 2.